Here is a 94-residue protein sequence, read N- to C-terminus: MVYISNGQALDSRSQSPWRLSFITDFFWGIAEFVVLFFRTLLQQDVKKRRGYGGSSDSRYDDGRGPPGNPPRRMGRINHLRGPNPPPMAGGUGR.

A helical transmembrane segment spans residues 20–42 (LSFITDFFWGIAEFVVLFFRTLL). Residues 48 to 94 (KRRGYGGSSDSRYDDGRGPPGNPPRRMGRINHLRGPNPPPMAGGUGR) form a disordered region. Residue selenocysteine 92 is a non-standard amino acid, selenocysteine.

The protein belongs to the selenoprotein K family. As to quaternary structure, interacts with DERL1, DERL2, DERL3 and SELENOS. The SELENOK-SELENOS complex interacts with VCP. Interacts with ZDHHC6. Cleaved by CAPN2/m-calpain in resting macrophages but not in activated macrophages. Macrophage activation up-regulates expression of the calpain inhibitor CAST/calpastatin, resulting in inhibition of CAPN2 activity. In terms of processing, truncated SELENOK proteins produced by failed UGA/Sec decoding are ubiquitinated by the CRL2(KLHDC2) complex, which recognizes the diglycine (Gly-Gly) at the C-terminus of truncated SELENOK proteins.

Its subcellular location is the endoplasmic reticulum membrane. The protein localises to the cell membrane. In terms of biological role, required for Ca(2+) flux in immune cells and plays a role in T-cell proliferation and in T-cell and neutrophil migration. Involved in endoplasmic reticulum-associated degradation (ERAD) of soluble glycosylated proteins. Required for palmitoylation and cell surface expression of CD36 and involved in macrophage uptake of low-density lipoprotein and in foam cell formation. Together with ZDHHC6, required for palmitoylation of ITPR1 in immune cells, leading to regulate ITPR1 stability and function. Plays a role in protection of cells from ER stress-induced apoptosis. Protects cells from oxidative stress when overexpressed in cardiomyocytes. The chain is Selenoprotein K from Sus scrofa (Pig).